We begin with the raw amino-acid sequence, 202 residues long: Recombination protein RecR (202 aa).

A C4-type zinc finger spans residues 56–71; that stretch reads CVVCGTVSDGELCRIC. Positions 79–179 constitute a Toprim domain; sequence TMICVVEEPK…TVTRLASGLP (101 aa).

Belongs to the RecR family.

In terms of biological role, may play a role in DNA repair. It seems to be involved in an RecBC-independent recombinational process of DNA repair. It may act with RecF and RecO. The sequence is that of Recombination protein RecR from Nocardia farcinica (strain IFM 10152).